Reading from the N-terminus, the 985-residue chain is Alpha-glucosidase (985 aa).

The first 25 residues, 1–25, serve as a signal peptide directing secretion; the sequence is MVKLTHLLARAWLVPLAYGASQSLL. Threonine 36 is a glycosylation site (O-linked (Man) threonine). N-linked (GlcNAc...) asparagine glycosylation is found at asparagine 124, asparagine 143, asparagine 218, asparagine 347, and asparagine 422. The active-site Nucleophile is aspartate 490. Glutamate 493 is an active-site residue. N-linked (GlcNAc...) asparagine glycosylation is found at asparagine 506, asparagine 534, and asparagine 537. O-linked (Man) serine glycosylation is found at serine 545 and serine 550. Threonine 559 is a glycosylation site (O-linked (Man) threonine). Residue serine 560 is glycosylated (O-linked (Man) serine). Threonine 561 is a glycosylation site (O-linked (Man) threonine). An O-linked (Man) serine glycan is attached at serine 562. Threonine 571 carries O-linked (Man) threonine glycosylation. N-linked (GlcNAc...) asparagine glycans are attached at residues asparagine 601 and asparagine 623. The Proton donor role is filled by aspartate 660. Residues asparagine 835 and asparagine 881 are each glycosylated (N-linked (GlcNAc...) asparagine). Serine 895 is a glycosylation site (O-linked (Man) serine). Asparagine 899, asparagine 957, and asparagine 970 each carry an N-linked (GlcNAc...) asparagine glycan.

The protein belongs to the glycosyl hydrolase 31 family. In terms of processing, the O-linked saccharide is not identified, but is probably mannose.

It catalyses the reaction Hydrolysis of terminal, non-reducing (1-&gt;4)-linked alpha-D-glucose residues with release of alpha-D-glucose.. Hydrolyzes malto-oligosaccharides, but has a low activity toward soluble starch. In Aspergillus niger, this protein is Alpha-glucosidase (aglA).